We begin with the raw amino-acid sequence, 466 residues long: SVGFKAGVKDYKLTYYTPDYETKDTDILAAFRVTPQPGVPPEEAGAAVAAESSTGTWTTVWTDGLTSLDRYKGRCYDIEPVAGEENQYIAYVAYPLDLFEEGSVTNMFTSIVGNVFGFKALRALRLEDLRIPPAYSKTFQGPPHGIQVERDKLNKYGRPLLGCTIKPKLGLSAKNYGRAVYECLRGGLDFTKDDENVNSQPFMRWRDRFLFCAEALYKAQAETGEIKGHYLNATAGTCEEMIKRAVFARELGVPIVMHDYLTGGFTANTSLAHYCRDNGLLLHIHRAMHAVIDRQKNHGIHFRVLAKALRMSGGDHIHSGTVVGKLEGERDITLGFVDLLRDDFIEKDRSRGIYFTQDWVSLPGVLPVASGGIHVWHMPALTEIFGDDSVLQFGGGTLGHPWGNAPGAVANRVALEACVQARNEGRDLAREGNEIIREASKWSPELAAACEVWKEIKFEFQAMDTL.

N6,N6,N6-trimethyllysine is present on Lys-5. Substrate-binding residues include Asn-114 and Thr-164. Catalysis depends on Lys-166, which acts as the Proton acceptor. A substrate-binding site is contributed by Lys-168. Residues Lys-192, Asp-194, and Glu-195 each contribute to the Mg(2+) site. Position 192 is an N6-carboxylysine (Lys-192). His-285 (proton acceptor) is an active-site residue. Substrate-binding residues include Arg-286, His-318, and Ser-370.

It belongs to the RuBisCO large chain family. Type I subfamily. Heterohexadecamer of 8 large chains and 8 small chains; disulfide-linked. The disulfide link is formed within the large subunit homodimers. The cofactor is Mg(2+). In terms of processing, the disulfide bond which can form in the large chain dimeric partners within the hexadecamer appears to be associated with oxidative stress and protein turnover.

The protein resides in the plastid. It is found in the chloroplast. The catalysed reaction is 2 (2R)-3-phosphoglycerate + 2 H(+) = D-ribulose 1,5-bisphosphate + CO2 + H2O. It carries out the reaction D-ribulose 1,5-bisphosphate + O2 = 2-phosphoglycolate + (2R)-3-phosphoglycerate + 2 H(+). In terms of biological role, ruBisCO catalyzes two reactions: the carboxylation of D-ribulose 1,5-bisphosphate, the primary event in carbon dioxide fixation, as well as the oxidative fragmentation of the pentose substrate in the photorespiration process. Both reactions occur simultaneously and in competition at the same active site. This is Ribulose bisphosphate carboxylase large chain from Poliothyrsis sinensis (Chinese pearlbloom tree).